Consider the following 350-residue polypeptide: Phosphoribosylformylglycinamidine cyclo-ligase (350 aa).

It belongs to the AIR synthase family.

Its subcellular location is the cytoplasm. It catalyses the reaction 2-formamido-N(1)-(5-O-phospho-beta-D-ribosyl)acetamidine + ATP = 5-amino-1-(5-phospho-beta-D-ribosyl)imidazole + ADP + phosphate + H(+). The protein operates within purine metabolism; IMP biosynthesis via de novo pathway; 5-amino-1-(5-phospho-D-ribosyl)imidazole from N(2)-formyl-N(1)-(5-phospho-D-ribosyl)glycinamide: step 2/2. This is Phosphoribosylformylglycinamidine cyclo-ligase from Cupriavidus taiwanensis (strain DSM 17343 / BCRC 17206 / CCUG 44338 / CIP 107171 / LMG 19424 / R1) (Ralstonia taiwanensis (strain LMG 19424)).